A 429-amino-acid polypeptide reads, in one-letter code: GDP-fucose protein O-fucosyltransferase 2 (429 aa).

The first 21 residues, 1-21 (MATLSFVFLLLGAVSWPPASA), serve as a signal peptide directing secretion. 53–57 (PEGFN) serves as a coordination point for GDP-beta-L-fucose. The active-site Proton acceptor is the Glu-54. Cys-161 and Cys-192 are disulfide-bonded. Residues Asn-189, Asn-209, and Asn-259 are each glycosylated (N-linked (GlcNAc...) asparagine). GDP-beta-L-fucose contacts are provided by residues 292–294 (HLR), Asp-371, and 388–389 (TF). An intrachain disulfide couples Cys-412 to Cys-419.

Belongs to the glycosyltransferase 68 family. Isoform A is expressed in fetal liver and peripheral blood lymphocytes. Isoform B is expressed in spleen, lung, testis, bone marrow, thymus, pancreas, prostate, fetal brain, fetal liver and fetal kidney. Isoform C is expressed in brain, heart, spleen, liver, lung, stomach, testis, placenta, skin, thymus, pancreas, mammary gland, prostate, fetal brain, fetal liver and fetal heart.

It is found in the endoplasmic reticulum. Its subcellular location is the golgi apparatus. The enzyme catalyses L-seryl-[protein] + GDP-beta-L-fucose = 3-O-(alpha-L-fucosyl)-L-seryl-[protein] + GDP + H(+). The catalysed reaction is L-threonyl-[protein] + GDP-beta-L-fucose = 3-O-(alpha-L-fucosyl)-L-threonyl-[protein] + GDP + H(+). It participates in protein modification; protein glycosylation. Inhibited by EDTA and by Zn(2+). In terms of biological role, catalyzes the reaction that attaches fucose through an O-glycosidic linkage to a conserved serine or threonine residue in the consensus sequence C1-X-X-S/T-C2 of thrombospondin type I repeats (TSRs) where C1 and C2 are the first and second cysteines of the repeat, respectively. O-fucosylates members of several protein families including the ADAMTS, the thrombospondin (TSP) and spondin families. Required for the proper secretion of ADAMTS family members such as ADAMTSL1 and ADAMTS13. The O-fucosylation of TSRs is also required for restricting epithelial to mesenchymal transition (EMT), maintaining the correct patterning of mesoderm and localization of the definite endoderm. In Homo sapiens (Human), this protein is GDP-fucose protein O-fucosyltransferase 2 (POFUT2).